A 540-amino-acid chain; its full sequence is Keratin, type II cytoskeletal 73 (540 aa).

A head region spans residues methionine 1 to glutamine 131. Residues glutamate 132–leucine 167 form a coil 1A region. Residues glutamate 132–methionine 445 enclose the IF rod domain. Residues glutamine 168–tyrosine 186 form a linker 1 region. Residues isoleucine 187–methionine 278 form a coil 1B region. Positions glutamine 279–isoleucine 302 are linker 12. Positions isoleucine 303–glutamate 441 are coil 2. Residues glutamate 442–arginine 540 are tail. Residues glycine 509–arginine 540 are disordered. Positions alanine 530–arginine 540 are enriched in polar residues.

It belongs to the intermediate filament family. As to quaternary structure, heterotetramer of two type I and two type II keratins.

Functionally, has a role in hair formation. Specific component of keratin intermediate filaments in the inner root sheath (IRS) of the hair follicle. The sequence is that of Keratin, type II cytoskeletal 73 (KRT73) from Bos taurus (Bovine).